A 274-amino-acid polypeptide reads, in one-letter code: Rhamnulose-1-phosphate aldolase (274 aa).

Residue E117 is part of the active site. 3 residues coordinate Zn(2+): H141, H143, and H212.

Belongs to the aldolase class II family. RhaD subfamily. As to quaternary structure, homotetramer. Requires Zn(2+) as cofactor.

The protein resides in the cytoplasm. The catalysed reaction is L-rhamnulose 1-phosphate = (S)-lactaldehyde + dihydroxyacetone phosphate. It functions in the pathway carbohydrate degradation; L-rhamnose degradation; glycerone phosphate from L-rhamnose: step 3/3. Catalyzes the reversible cleavage of L-rhamnulose-1-phosphate to dihydroxyacetone phosphate (DHAP) and L-lactaldehyde. The protein is Rhamnulose-1-phosphate aldolase of Shigella dysenteriae serotype 1 (strain Sd197).